Reading from the N-terminus, the 681-residue chain is Fibulin-1 (681 aa).

Positions 1–17 are cleaved as a signal peptide; the sequence is MDLYMIVLLSLCGLLRA. 33 disulfide bridges follow: Cys29–Cys55, Cys30–Cys62, Cys43–Cys63, Cys72–Cys103, Cys85–Cys104, Cys106–Cys125, Cys107–Cys138, Cys114–Cys139, Cys162–Cys171, Cys167–Cys176, Cys178–Cys191, Cys197–Cys210, Cys204–Cys219, Cys225–Cys237, Cys243–Cys256, Cys250–Cys265, Cys271–Cys283, Cys289–Cys301, Cys317–Cys330, Cys336–Cys348, Cys343–Cys357, Cys359–Cys372, Cys378–Cys390, Cys386–Cys399, Cys401–Cys414, Cys420–Cys429, Cys440–Cys454, Cys460–Cys473, Cys469–Cys482, Cys484–Cys498, Cys504–Cys517, Cys511–Cys526, and Cys531–Cys553. Anaphylatoxin-like domains lie at 29 to 63, 68 to 107, and 108 to 139; these read CCED…EQCC, EDSI…CECC, and LLGS…RSCC. Residues 158–192 enclose the EGF-like 1 domain; it reads TEDQCRAAGCAQRCLNGTCSCLDGFKLKTDGKHCE. Asn173 carries N-linked (GlcNAc...) asparagine glycosylation. An EGF-like 2; calcium-binding domain is found at 193 to 238; the sequence is DINECLLGPHHCVTGERCINTLGSYRCQREISCGTGYELTDNNKCK. In terms of domain architecture, EGF-like 3; calcium-binding spans 239–284; it reads DIDECDLGTHNCAAEMECQNTAGSFRCRPRMQCAAGFIQDALGSCI. Residues 285 to 331 form the EGF-like 4; calcium-binding domain; that stretch reads DINECVSVTALSRGQMCFNTVGSFICQRHSVTCGRGYHLNAEGTRCV. An EGF-like 5; calcium-binding domain is found at 332–373; the sequence is DIDECAGPDNSCDGHGCINLVGSYRCECRTGFIFNSISRSCE. Residues 374–415 form the EGF-like 6; calcium-binding domain; it reads DIDECRNYPGRLCAHKCENILGSYKCSCTAGFKLADDGRNCD. Positions 416–455 constitute an EGF-like 7; calcium-binding domain; the sequence is DVNECESSPCSQGCANVYGSYQSYCRRGYQLSDADGITCE. The 44-residue stretch at 456–499 folds into the EGF-like 8; calcium-binding domain; it reads DIDECALPTGGHICSYRCHNTPGSFHCTCPASGYTLAANGRSCQ. Residues 500–554 form the EGF-like 9; calcium-binding domain; that stretch reads DIDECLTGTHSCSESESCFNIQGGFRCLSFDCPANYRRSGDTRPRVDRADIIRCV.

The protein belongs to the fibulin family. In terms of assembly, homomultimerizes and interacts with various extracellular matrix components such as FN1, LAMA1, NID, AGC1 and CSPG2.

The protein localises to the secreted. It localises to the extracellular space. The protein resides in the extracellular matrix. Functionally, incorporated into fibronectin-containing matrix fibers. May play a role in cell adhesion and migration along protein fibers within the extracellular matrix (ECM). Could be important for certain developmental processes and contribute to the supramolecular organization of ECM architecture, in particular to those of basement membranes. In Danio rerio (Zebrafish), this protein is Fibulin-1 (fbln1).